A 411-amino-acid polypeptide reads, in one-letter code: Phospholipase A1-II 6 (411 aa).

S226 acts as the Acyl-ester intermediate in catalysis. Residues S226, D296, and H334 each act as charge relay system in the active site.

This sequence belongs to the AB hydrolase superfamily. Lipase family.

Its subcellular location is the cytoplasm. Acylhydrolase that catalyzes the hydrolysis of phospholipids at the sn-1 position. The polypeptide is Phospholipase A1-II 6 (Oryza sativa subsp. japonica (Rice)).